A 466-amino-acid polypeptide reads, in one-letter code: Phytase A (466 aa).

The signal sequence occupies residues 1–19; sequence MAVLSVLLPITFLLSSVTG. A disulfide bridge links cysteine 30 with cysteine 39. 6 residues coordinate 1D-myo-inositol hexakisphosphate: glutamine 49, tyrosine 50, arginine 80, histidine 81, arginine 84, and threonine 87. Cystine bridges form between cysteine 70/cysteine 413, cysteine 214/cysteine 464, cysteine 263/cysteine 281, and cysteine 435/cysteine 443. The Nucleophile role is filled by histidine 81. N-linked (GlcNAc...) asparagine glycosylation is found at asparagine 104 and asparagine 119. Arginine 164 provides a ligand contact to 1D-myo-inositol hexakisphosphate. Asparagine 206 and asparagine 219 each carry an N-linked (GlcNAc...) asparagine glycan. Lysine 300 serves as a coordination point for 1D-myo-inositol hexakisphosphate. N-linked (GlcNAc...) asparagine glycosylation is found at asparagine 338 and asparagine 351. 1D-myo-inositol hexakisphosphate-binding residues include histidine 360 and aspartate 361. Asparagine 375 carries N-linked (GlcNAc...) asparagine glycosylation.

This sequence belongs to the histidine acid phosphatase family. As to quaternary structure, monomer.

Its subcellular location is the secreted. The catalysed reaction is 1D-myo-inositol hexakisphosphate + H2O = 1D-myo-inositol 1,2,4,5,6-pentakisphosphate + phosphate. It carries out the reaction 1D-myo-inositol 1,2,4,5,6-pentakisphosphate + H2O = 1D-myo-inositol 1,2,5,6-tetrakisphosphate + phosphate. The enzyme catalyses 1D-myo-inositol 1,2,5,6-tetrakisphosphate + H2O = 1D-myo-inositol 1,2,6-trisphosphate + phosphate. It catalyses the reaction 1D-myo-inositol 1,2,6-trisphosphate + H2O = 1D-myo-inositol 1,2-bisphosphate + phosphate. The catalysed reaction is 1D-myo-inositol 1,2-bisphosphate + H2O = 1D-myo-inositol 2-phosphate + phosphate. Functionally, catalyzes the phosphate monoester hydrolysis of phytic acid (myo-inositol hexakisphosphate), which results in the stepwise formation of myo-inositol pentakis-, tetrakis-, tris-, bis-, and monophosphates, as well as the liberation of inorganic phosphate. Myo-inositol 2-monophosphate is the end product. This Aspergillus oryzae (strain ATCC 42149 / RIB 40) (Yellow koji mold) protein is Phytase A (phyA).